The chain runs to 654 residues: MTVENAPQRETHAFQAEINQLLSLVINSLYSHKEIFLRELVSNASDALDKLRFRAITEPELLADEPALELRLIPDEAKGTLTIEDTGIGMSHDELVKNLGTIAHSGSREFIEALAQKGQQKDMQLIGQFGVGFYSAYLVADRVEVVSRAAGQGQSAWRWTSEAKGSFTVEPAERAARGTSITLHLKEDQKEFLGEWRLRSLITQYSDYVGHPIKLQVSKTTGTGDEAKTETSLEVVNKASALWQRSKSEITDEQYQEFYKHLTHDWEAPLAWTHFKADGNTQFTGLLFVPKQPPFDLDAQQQRGVRLFVKRVFIMDRCEELVPQWLRFVRGVIDSDDLPLNVSRELLQDSQVVRAIRKHVVKKSVDLLEKLAKDKPDDYLTFWKAFGTVLKEGLATEAEQKDKLGGLLRYESSREEGLTSLADYVGRMKEGQEAIYYVYGESRKAVADSPHLEALKQRGFEVLYMTDPVDEWAAQGLREFQGKPLVSALQADLKLQSTDEQKKEQEQHAEGLKTLTSKMKDVLQESVREVRVSDRLTDSPVCLVVPEGGSPAYLERLLQQRGRGAGMPRVKRILEVNPKHPVIEHLKAVHDRDPAAAQVAEWIELLHDQALLTEGSTIADPNRFARRMTGLLTQVAALAAAPAPAQTPASATAS.

An a; substrate-binding region spans residues 1–344; it reads MTVENAPQRE…SDDLPLNVSR (344 aa). Residues 345–556 form a b region; that stretch reads ELLQDSQVVR…EGGSPAYLER (212 aa). Residues 557-654 are c; the sequence is LLQQRGRGAG…AQTPASATAS (98 aa).

It belongs to the heat shock protein 90 family. As to quaternary structure, homodimer.

The protein resides in the cytoplasm. Molecular chaperone. Has ATPase activity. This Myxococcus xanthus (strain DK1622) protein is Chaperone protein HtpG.